We begin with the raw amino-acid sequence, 275 residues long: Translation initiation factor 2 subunit alpha (275 aa).

One can recognise an S1 motif domain in the interval 12–83; sequence GEFVVATVKR…RKGHIDLSLR (72 aa).

The protein belongs to the eIF-2-alpha family. Heterotrimer composed of an alpha, a beta and a gamma chain.

Functionally, eIF-2 functions in the early steps of protein synthesis by forming a ternary complex with GTP and initiator tRNA. This Pyrococcus horikoshii (strain ATCC 700860 / DSM 12428 / JCM 9974 / NBRC 100139 / OT-3) protein is Translation initiation factor 2 subunit alpha (eif2a).